Here is a 391-residue protein sequence, read N- to C-terminus: Multidrug resistance protein MdtL (391 aa).

Residues M1 to R3 are Cytoplasmic-facing. The chain crosses the membrane as a helical span at residues F4 to V24. Residues G25 to H41 lie on the Periplasmic side of the membrane. Residues I42–A62 form a helical membrane-spanning segment. At D63 to K68 the chain is on the cytoplasmic side. A helical transmembrane segment spans residues P69–E89. The Periplasmic segment spans residues T90 to T92. Residues L93–F113 form a helical membrane-spanning segment. The Cytoplasmic portion of the chain corresponds to A114–S130. Residues L131–M151 form a helical membrane-spanning segment. Residues L152–Q157 lie on the Periplasmic side of the membrane. Residues S158–L178 form a helical membrane-spanning segment. Residues K179–S198 lie on the Cytoplasmic side of the membrane. Residues L199–F221 traverse the membrane as a helical segment. Over V222 to M244 the chain is Periplasmic. A helical transmembrane segment spans residues A245–F265. Topologically, residues K266 to R268 are cytoplasmic. A helical membrane pass occupies residues T269–P289. At S290–A292 the chain is on the periplasmic side. A helical membrane pass occupies residues I293–M313. Topologically, residues S314–T330 are cytoplasmic. Residues L331–I351 traverse the membrane as a helical segment. The Periplasmic segment spans residues G352–N355. A helical membrane pass occupies residues M356–A376. The Cytoplasmic segment spans residues P377–A391.

This sequence belongs to the major facilitator superfamily. DHA1 family. MdtL (TC 2.A.1.2.22) subfamily.

It localises to the cell inner membrane. This is Multidrug resistance protein MdtL from Shigella dysenteriae serotype 1 (strain Sd197).